The chain runs to 485 residues: T-complex protein 1 subunit theta (485 aa).

Belongs to the TCP-1 chaperonin family. Component of the T-complex protein 1 (TCP1) complex.

It is found in the cytoplasm. Molecular chaperone; assists the folding of proteins upon ATP hydrolysis. In Encephalitozoon cuniculi (strain GB-M1) (Microsporidian parasite), this protein is T-complex protein 1 subunit theta (CCT8).